Consider the following 204-residue polypeptide: MKEIVIATKNAGKVREFAALFAKRGVEVKSLLDFPDAPDVAETGSTFAENAVLKAEAASRRLKRPVIADDSGLVVDALGGRPGVHSARYAGEDKNDARNIAKLLRELDGVPMEQRTARFHCALAVAIPGRPTAVVEATCDGYIAEAPRGEGGFGYDPVFYLPERGKTMAELAPEEKNQISHRAKALTKLDEQWEEIVGGKGRTE.

8-13 (TKNAGK) lines the substrate pocket. Aspartate 70 acts as the Proton acceptor in catalysis. Aspartate 70 is a binding site for Mg(2+). Residues serine 71, 153–156 (FGYD), lysine 176, and 181–182 (HR) each bind substrate.

The protein belongs to the HAM1 NTPase family. In terms of assembly, homodimer. Mg(2+) is required as a cofactor.

The catalysed reaction is XTP + H2O = XMP + diphosphate + H(+). The enzyme catalyses dITP + H2O = dIMP + diphosphate + H(+). It carries out the reaction ITP + H2O = IMP + diphosphate + H(+). Its function is as follows. Pyrophosphatase that catalyzes the hydrolysis of nucleoside triphosphates to their monophosphate derivatives, with a high preference for the non-canonical purine nucleotides XTP (xanthosine triphosphate), dITP (deoxyinosine triphosphate) and ITP. Seems to function as a house-cleaning enzyme that removes non-canonical purine nucleotides from the nucleotide pool, thus preventing their incorporation into DNA/RNA and avoiding chromosomal lesions. This is dITP/XTP pyrophosphatase from Geobacillus kaustophilus (strain HTA426).